Here is a 265-residue protein sequence, read N- to C-terminus: Inositol-1-monophosphatase (265 aa).

Residues Glu-69, Asp-87, Ile-89, and Asp-90 each coordinate Mg(2+). A substrate-binding site is contributed by Glu-69. Substrate contacts are provided by residues 89–92, Arg-185, and Asp-214; that span reads IDGT. Asp-214 contributes to the Mg(2+) binding site.

Belongs to the inositol monophosphatase superfamily. Mg(2+) is required as a cofactor.

The enzyme catalyses a myo-inositol phosphate + H2O = myo-inositol + phosphate. It carries out the reaction a ribonucleoside 5'-phosphate + H2O = a ribonucleoside + phosphate. Its function is as follows. Hydrolyzes myo-inositol monophosphate. Catalyzes the dephosphorylation of GMP and IMP. The chain is Inositol-1-monophosphatase from Bacillus subtilis (strain 168).